The primary structure comprises 173 residues: Zinc finger matrin-type protein 5 (173 aa).

The C3H1-type zinc finger occupies 51–79 (ERSKEVCRKFVQTGQCVFGTSCRFSHMSE). Positions 83–111 (KMLEQKIDDEKRQKEDPDQDGSSERSVDE) are disordered.

As to quaternary structure, component of the U11/U12 snRNPs that are part of the U12-type spliceosome.

The protein localises to the nucleus. This Danio rerio (Zebrafish) protein is Zinc finger matrin-type protein 5 (zmat5).